A 257-amino-acid chain; its full sequence is MGRVIRGQRKGAGSVFKAHVKHRKGAAKLRAVDFAERHGYIKGIVKDIIHDPGRGAPLAKVAFRDPYRFKKRTELFVAAEGIHTGQFVYCGKKAQLNIGNVLPVGTMPEGTIVCCVEEKPGDRGKLARASGNYATVISHNPETKKTRVKLPSGSKKVISSANRAIVGVVAGGGRIDKPILKAGRAYHKYKAKRNCWPRVRGVAMNPVEHPFGGGNHQHIGKPSTIRRDAPAGRKVGLIAARRTGRLRGTKTVQEKEN.

A disordered region spans residues 207-231; sequence VEHPFGGGNHQHIGKPSTIRRDAPA.

It belongs to the universal ribosomal protein uL2 family. Component of the large ribosomal subunit.

The protein resides in the cytoplasm. In terms of biological role, component of the large ribosomal subunit. The ribosome is a large ribonucleoprotein complex responsible for the synthesis of proteins in the cell. The polypeptide is Large ribosomal subunit protein uL2 (rpl8) (Xenopus tropicalis (Western clawed frog)).